The following is a 123-amino-acid chain: uncharacterized protein (123 aa).

This is an uncharacterized protein from Aquifex aeolicus (strain VF5).